Here is a 431-residue protein sequence, read N- to C-terminus: REST corepressor 1 (431 aa).

Residues Met1–Gly10 are compositionally biased toward basic and acidic residues. A disordered region spans residues Met1–Arg53. A compositionally biased stretch (polar residues) spans Asn17–Val28. Low complexity predominate over residues Asn29 to Ser42. One can recognise an ELM2 domain in the interval Gly50–Thr135. The 52-residue stretch at Pro136–Ser187 folds into the SANT 1 domain. The tract at residues Ser190–Gly262 is disordered. The span at Glu224–Ile242 shows a compositional bias: basic and acidic residues. Residues Gln267 to Gly314 adopt a coiled-coil conformation. The 52-residue stretch at Lys327–Asn378 folds into the SANT 2 domain.

It belongs to the CoREST family. Component of a BHC histone deacetylase complex that contains KDM1A. As to expression, expressed in territories in which neurogenesis takes place.

It is found in the nucleus. Its function is as follows. Essential component of the BHC complex, a corepressor complex that represses transcription of neuron-specific genes in non-neuronal cells. The BHC complex is recruited at RE1/NRSE sites by REST and acts by deacetylating and demethylating specific sites on histones, thereby acting as a chromatin modifier. In the BHC complex, it serves as a molecular beacon for the recruitment of molecular machinery that imposes silencing across a chromosomal interval. Plays a central role in demethylation of Lys-4 of histone H3 by promoting demethylase activity of KDM1A on core histones and nucleosomal substrates. The sequence is that of REST corepressor 1 (rcor1) from Xenopus laevis (African clawed frog).